Consider the following 324-residue polypeptide: NADH-ubiquinone oxidoreductase chain 1 (324 aa).

Transmembrane regions (helical) follow at residues 9-29 (LINP…LTLL), 76-96 (LFLV…APMP), 106-126 (LGVL…LGSG), 146-166 (ISYE…WGGY), 177-197 (ALWL…STLA), 228-248 (LLFL…AILF), 259-279 (ELTT…FLWV), and 299-319 (FLPL…AFAG).

The protein belongs to the complex I subunit 1 family.

It localises to the mitochondrion inner membrane. The catalysed reaction is a ubiquinone + NADH + 5 H(+)(in) = a ubiquinol + NAD(+) + 4 H(+)(out). In terms of biological role, core subunit of the mitochondrial membrane respiratory chain NADH dehydrogenase (Complex I) that is believed to belong to the minimal assembly required for catalysis. Complex I functions in the transfer of electrons from NADH to the respiratory chain. The immediate electron acceptor for the enzyme is believed to be ubiquinone. The polypeptide is NADH-ubiquinone oxidoreductase chain 1 (MT-ND1) (Formosania lacustris (Oriental stream loach)).